The sequence spans 369 residues: tRNA-specific 2-thiouridylase MnmA (369 aa).

ATP-binding positions include 12-19 (GMSGGVDS) and Met38. The interaction with target base in tRNA stretch occupies residues 98–100 (NPD). Cys103 serves as the catalytic Nucleophile. Cys103 and Cys200 are disulfide-bonded. Residue Gly128 coordinates ATP. The segment at 150–152 (KDQ) is interaction with tRNA. The Cysteine persulfide intermediate role is filled by Cys200. The interval 312–313 (RY) is interaction with tRNA.

This sequence belongs to the MnmA/TRMU family.

The protein resides in the cytoplasm. It catalyses the reaction S-sulfanyl-L-cysteinyl-[protein] + uridine(34) in tRNA + AH2 + ATP = 2-thiouridine(34) in tRNA + L-cysteinyl-[protein] + A + AMP + diphosphate + H(+). Its function is as follows. Catalyzes the 2-thiolation of uridine at the wobble position (U34) of tRNA, leading to the formation of s(2)U34. The sequence is that of tRNA-specific 2-thiouridylase MnmA from Tolumonas auensis (strain DSM 9187 / NBRC 110442 / TA 4).